A 2271-amino-acid chain; its full sequence is Serine-rich adhesin for platelets (2271 aa).

A signal peptide spans 1-89 (MSKRQKAFHD…VNMLHDQQAF (89 aa)). The serine-rich repeat region 1, SRR1 stretch occupies residues 90 to 230 (AASDAPLTSE…KTSTTSTSTA (141 aa)). Positions 100–111 (LNTQSETVGNQN) are enriched in polar residues. The segment at 100-229 (LNTQSETVGN…NKTSTTSTST (130 aa)) is disordered. Positions 112–128 (STTIEASTSTADSTSVT) are enriched in low complexity. The segment covering 129-140 (KNSSSVQTSNSD) has biased composition (polar residues). A compositionally biased stretch (low complexity) spans 150-229 (VTSTTNSTSN…NKTSTTSTST (80 aa)). A non-repeat region (NRR) region spans residues 231–751 (PVKLRTFSRL…TTFKYEVTRN (521 aa)). The segment at 245–491 (FASAATTTAV…QQVQFGTFEY (247 aa)) is L-lectin module. Ca(2+) contacts are provided by Asp-365, Tyr-367, Asn-369, and Asp-382. The interval 492–571 (TESAVTQVRY…NAGQSVTYYF (80 aa)) is beta-grasp module. Residues 572 to 659 (TDVKAPTVTV…KSTTTFTINV (88 aa)) are cadherin-like module-1. Positions 573, 575, 601, 602, 645, 661, 663, 690, 691, and 734 each coordinate Ca(2+). The cadherin-like module-2 stretch occupies residues 660-751 (VDTTAPTVTP…TTFKYEVTRN (92 aa)). 2 disordered regions span residues 751-791 (NSMS…VVST) and 806-2242 (SVSA…NGLL). Low complexity-rich tracts occupy residues 752–791 (SMSDSVSTSGSTQQSQSVSTSKADSQSASTSTSGSIVVST), 806–1392 (SVSA…LSLS), and 1402–2214 (SNSA…ATSE). A serine-rich repeat region 2, SRR2 region spans residues 752 to 2232 (SMSDSVSTSG…AQSEKRLPDT (1481 aa)). The LPXTG sorting signal motif lies at 2229-2233 (LPDTG). A Pentaglycyl murein peptidoglycan amidated threonine modification is found at Thr-2232. A propeptide spans 2233–2271 (GDSIKQNGLLGGVMTLLVGLGLMKRKKKKDENDQDDSQA) (removed by sortase).

The protein belongs to the serine-rich repeat protein (SRRP) family. Proteolytically cleaved by a metalloprotease. Post-translationally, glycosylated. It is probable that most of the Ser residues in SSR1 and SSR2 are O-GlcNAcylated. Sequential glycosylation by sugar transferases are able to generate complex sugar polymorphisms.

Its subcellular location is the secreted. It is found in the cell wall. Mediates binding to human platelets, possibly through a receptor-ligand interaction. Probably associated with virulence in endovascular infection. Plays a positive role in biofilm formation, possibly by self-association via the non-repeat region (NRR or binding region, BR). Binds to and plays a role in human lung epithelial cell invasion via the L-lectin module of its NRR domain; N-acetylneuraminic acid (Neu5Ac) inhibits binding. Treatment of host cells with neuraminidase decreases adherence of S.aureus cells, suggesting SraP recognizes a host terminal Neu5Ac moiety as a receptor. This chain is Serine-rich adhesin for platelets, found in Staphylococcus aureus (strain NCTC 8325 / PS 47).